Reading from the N-terminus, the 194-residue chain is Protein GrpE (194 aa).

A compositionally biased stretch (polar residues) spans 1-12; that stretch reads MSSKEQNTPNEQ. Positions 1 to 39 are disordered; the sequence is MSSKEQNTPNEQASDEIETEQAKNQGADTAAEAADQRDE.

Belongs to the GrpE family. In terms of assembly, homodimer.

Its subcellular location is the cytoplasm. Its function is as follows. Participates actively in the response to hyperosmotic and heat shock by preventing the aggregation of stress-denatured proteins, in association with DnaK and GrpE. It is the nucleotide exchange factor for DnaK and may function as a thermosensor. Unfolded proteins bind initially to DnaJ; upon interaction with the DnaJ-bound protein, DnaK hydrolyzes its bound ATP, resulting in the formation of a stable complex. GrpE releases ADP from DnaK; ATP binding to DnaK triggers the release of the substrate protein, thus completing the reaction cycle. Several rounds of ATP-dependent interactions between DnaJ, DnaK and GrpE are required for fully efficient folding. This Erwinia tasmaniensis (strain DSM 17950 / CFBP 7177 / CIP 109463 / NCPPB 4357 / Et1/99) protein is Protein GrpE.